Consider the following 229-residue polypeptide: Enolase-phosphatase E1 (229 aa).

The protein belongs to the HAD-like hydrolase superfamily. MasA/MtnC family. In terms of assembly, monomer. Mg(2+) serves as cofactor.

It carries out the reaction 5-methylsulfanyl-2,3-dioxopentyl phosphate + H2O = 1,2-dihydroxy-5-(methylsulfanyl)pent-1-en-3-one + phosphate. The protein operates within amino-acid biosynthesis; L-methionine biosynthesis via salvage pathway; L-methionine from S-methyl-5-thio-alpha-D-ribose 1-phosphate: step 3/6. It participates in amino-acid biosynthesis; L-methionine biosynthesis via salvage pathway; L-methionine from S-methyl-5-thio-alpha-D-ribose 1-phosphate: step 4/6. Functionally, bifunctional enzyme that catalyzes the enolization of 2,3-diketo-5-methylthiopentyl-1-phosphate (DK-MTP-1-P) into the intermediate 2-hydroxy-3-keto-5-methylthiopentenyl-1-phosphate (HK-MTPenyl-1-P), which is then dephosphorylated to form the acireductone 1,2-dihydroxy-3-keto-5-methylthiopentene (DHK-MTPene). In Yersinia enterocolitica serotype O:8 / biotype 1B (strain NCTC 13174 / 8081), this protein is Enolase-phosphatase E1.